A 313-amino-acid polypeptide reads, in one-letter code: Beta-lactamase (313 aa).

Positions Met-1–Val-15 are cleaved as a signal peptide. The active-site Acyl-ester intermediate is Ser-190.

This sequence belongs to the class-C beta-lactamase family.

The catalysed reaction is a beta-lactam + H2O = a substituted beta-amino acid. Its function is as follows. Upon expression in E.coli enables the latter to utilize penicillin as a carbon source. This chain is Beta-lactamase (penA), found in Burkholderia multivorans (strain ATCC 17616 / 249).